Here is a 458-residue protein sequence, read N- to C-terminus: Cysteine--tRNA ligase (458 aa).

Cys-33 is a binding site for Zn(2+). The 'HIGH' region signature appears at 35 to 45; the sequence is PTVYDFAHIGN. The Zn(2+) site is built by Cys-221, His-246, and Glu-250. The short motif at 279 to 283 is the 'KMSKS' region element; sequence KMSKS. Lys-282 provides a ligand contact to ATP.

Belongs to the class-I aminoacyl-tRNA synthetase family. Monomer. The cofactor is Zn(2+).

The protein resides in the cytoplasm. It catalyses the reaction tRNA(Cys) + L-cysteine + ATP = L-cysteinyl-tRNA(Cys) + AMP + diphosphate. The protein is Cysteine--tRNA ligase of Rhizobium etli (strain ATCC 51251 / DSM 11541 / JCM 21823 / NBRC 15573 / CFN 42).